The sequence spans 614 residues: UPF0329 protein ECU03_0090 (614 aa).

2 stretches are compositionally biased toward basic and acidic residues: residues 317–338 (EREE…EESL) and 345–354 (LRMEEKEKSK). A disordered region spans residues 317-420 (EREEAEKMRG…KKSRSKGHRY (104 aa)). The segment covering 355–364 (SRGKKKKGGK) has biased composition (basic residues). Residues 372 to 381 (AKMEEEKKDS) are compositionally biased toward basic and acidic residues. The span at 382–394 (EEVEESAEAEVSL) shows a compositional bias: acidic residues. The span at 408–420 (SSKKKSRSKGHRY) shows a compositional bias: basic residues.

It belongs to the UPF0329 family.

The protein is UPF0329 protein ECU03_0090 of Encephalitozoon cuniculi (strain GB-M1) (Microsporidian parasite).